The primary structure comprises 95 residues: Aspartyl/glutamyl-tRNA(Asn/Gln) amidotransferase subunit C (95 aa).

This sequence belongs to the GatC family. In terms of assembly, heterotrimer of A, B and C subunits.

It catalyses the reaction L-glutamyl-tRNA(Gln) + L-glutamine + ATP + H2O = L-glutaminyl-tRNA(Gln) + L-glutamate + ADP + phosphate + H(+). It carries out the reaction L-aspartyl-tRNA(Asn) + L-glutamine + ATP + H2O = L-asparaginyl-tRNA(Asn) + L-glutamate + ADP + phosphate + 2 H(+). In terms of biological role, allows the formation of correctly charged Asn-tRNA(Asn) or Gln-tRNA(Gln) through the transamidation of misacylated Asp-tRNA(Asn) or Glu-tRNA(Gln) in organisms which lack either or both of asparaginyl-tRNA or glutaminyl-tRNA synthetases. The reaction takes place in the presence of glutamine and ATP through an activated phospho-Asp-tRNA(Asn) or phospho-Glu-tRNA(Gln). This is Aspartyl/glutamyl-tRNA(Asn/Gln) amidotransferase subunit C from Shouchella clausii (strain KSM-K16) (Alkalihalobacillus clausii).